A 746-amino-acid chain; its full sequence is UvrABC system protein C (746 aa).

The GIY-YIG domain maps to 18–97 (AKPGVYKWRD…IKEFDPRFNV (80 aa)). Residues 211–246 (RPYIAQLTRDMKEASAELEFEKAARLRDQIQMLETV) enclose the UVR domain. A disordered region spans residues 557-577 (ANGNDNGEGGSDISGKGHAVP).

The protein belongs to the UvrC family. Interacts with UvrB in an incision complex.

Its subcellular location is the cytoplasm. In terms of biological role, the UvrABC repair system catalyzes the recognition and processing of DNA lesions. UvrC both incises the 5' and 3' sides of the lesion. The N-terminal half is responsible for the 3' incision and the C-terminal half is responsible for the 5' incision. The polypeptide is UvrABC system protein C (Bifidobacterium longum (strain DJO10A)).